Consider the following 323-residue polypeptide: Methionine adenosyltransferase 2 subunit beta (323 aa).

NADP(+) contacts are provided by residues Thr26 to Leu29, Tyr49 to Arg51, Asn60 to Leu61, Cys82, Arg86, Tyr146, and Leu172. The tract at residues Leu308 to His323 is required for interaction with MAT2A.

The protein belongs to the dTDP-4-dehydrorhamnose reductase family. MAT2B subfamily. Heterotrimer; composed of a catalytic mat2a homodimer that binds one regulatory mat2b chain. Heterohexamer; composed of a central, catalytic mat2a homotetramer flanked on either side by a regulatory mat2b chain. NADP binding increases the affinity for mat2a.

It participates in amino-acid biosynthesis; S-adenosyl-L-methionine biosynthesis; S-adenosyl-L-methionine from L-methionine: step 1/1. Its function is as follows. Regulatory subunit of S-adenosylmethionine synthetase 2, an enzyme that catalyzes the formation of S-adenosylmethionine from methionine and ATP. Regulates MAT2A catalytic activity by changing its kinetic properties, increasing its affinity for L-methionine. Can bind NADP (in vitro). In Danio rerio (Zebrafish), this protein is Methionine adenosyltransferase 2 subunit beta (mat2b).